Here is a 461-residue protein sequence, read N- to C-terminus: Zinc transporter 6 (461 aa).

At 1-33 the chain is on the cytoplasmic side; the sequence is MGTIHLFRKPQRSFFGKLLQEFRLVAADRRSWK. The helical transmembrane segment at 34 to 54 threads the bilayer; that stretch reads ILLFGAINLTCTGFLLMWCSS. Over 55–64 the chain is Extracellular; it reads TNSIALTAYT. The chain crosses the membrane as a helical span at residues 65-85; that stretch reads YLTIFDLFSLITCLVSYWVMM. Topologically, residues 86 to 98 are cytoplasmic; sequence RKPSPAYSFGFER. Residues 99–119 form a helical membrane-spanning segment; the sequence is LEVLAVFASTVLAQLGALFIL. The Extracellular portion of the chain corresponds to 120–134; the sequence is KESAERFLEQPEIHT. Residues 135–155 traverse the membrane as a helical segment; that stretch reads GRLLVGTFVALSFNLFTMLSI. The Cytoplasmic portion of the chain corresponds to 156-200; it reads RNKPFAYVSEAASTSWLQEHVADLSRSLCGIIPGLSSIFLPRMNP. A helical membrane pass occupies residues 201–221; it reads FVLIDLAGAFALCITYMLIEI. Topologically, residues 222 to 223 are extracellular; the sequence is NN. A helical transmembrane segment spans residues 224–244; that stretch reads YFAVDTASAIAIALMTFGTMY. Over 245–461 the chain is Cytoplasmic; the sequence is PMSVYSGKVL…TNNRIGQPRP (217 aa). A disordered region spans residues 362–393; sequence PPLKGTDDSNPVTSTPTKPSSPPPEFSFNTPG. Low complexity predominate over residues 370–379; sequence SNPVTSTPTK.

Belongs to the cation diffusion facilitator (CDF) transporter (TC 2.A.4) family. SLC30A subfamily. In terms of assembly, heterodimer with SLC30A5; form a functional zinc ion transmembrane transporter.

It is found in the golgi apparatus. Its subcellular location is the trans-Golgi network membrane. Its function is as follows. Has probably no intrinsic transporter activity but together with SLC30A5 forms a functional zinc ion:proton antiporter heterodimer, mediating zinc entry into the lumen of organelles along the secretory pathway. As part of that zinc ion:proton antiporter, contributes to zinc ion homeostasis within the early secretory pathway and regulates the activation and folding of enzymes like alkaline phosphatases and enzymes involved in phosphatidylinositol glycan anchor biosynthesis. This is Zinc transporter 6 (SLC30A6) from Bos taurus (Bovine).